Consider the following 571-residue polypeptide: Proline--tRNA ligase (571 aa).

It belongs to the class-II aminoacyl-tRNA synthetase family. ProS type 1 subfamily. Homodimer.

The protein resides in the cytoplasm. The enzyme catalyses tRNA(Pro) + L-proline + ATP = L-prolyl-tRNA(Pro) + AMP + diphosphate. In terms of biological role, catalyzes the attachment of proline to tRNA(Pro) in a two-step reaction: proline is first activated by ATP to form Pro-AMP and then transferred to the acceptor end of tRNA(Pro). As ProRS can inadvertently accommodate and process non-cognate amino acids such as alanine and cysteine, to avoid such errors it has two additional distinct editing activities against alanine. One activity is designated as 'pretransfer' editing and involves the tRNA(Pro)-independent hydrolysis of activated Ala-AMP. The other activity is designated 'posttransfer' editing and involves deacylation of mischarged Ala-tRNA(Pro). The misacylated Cys-tRNA(Pro) is not edited by ProRS. The polypeptide is Proline--tRNA ligase (Proteus mirabilis (strain HI4320)).